The chain runs to 383 residues: Plant intracellular Ras-group-related LRR protein 8 (383 aa).

LRR repeat units follow at residues 56–79, 80–102, 104–126, 127–149, 151–173, 174–197, 199–219, 221–244, 245–268, and 270–290; these read RQNIKTLDLSGMSLASLSASSINL, ASISKLDLSNNNIQKIPESLVAR, LNLWALDLQSNQLKTLPNSIGCL, SKLKFLNVSGNYLQSLPKTIEDC, SLEELNANFNELTRLPDAIGFEL, TNLTKLSVNSNKLVLLPNSVSYLT, LRVLDARLNRLSSLPEDLENL, NLQVLNVSQNFQHLTTLPYSVGLL, ISLVELDVSYNGITVLPDSLGCLR, and IQKLSVEGNPLISPPFEVVEQ. The GVYW; degenerate signature appears at 291–298; the sequence is GLEALKQY.

It belongs to the SHOC2 family. In terms of tissue distribution, widely expressed except flowers.

In terms of biological role, leucine-rich repeat protein that likely mediates protein interactions, possibly in the context of signal transduction. The chain is Plant intracellular Ras-group-related LRR protein 8 (PIRL8) from Arabidopsis thaliana (Mouse-ear cress).